The primary structure comprises 243 residues: Pyridoxine 5'-phosphate synthase (243 aa).

N9 provides a ligand contact to 3-amino-2-oxopropyl phosphate. Residue 11–12 (DH) coordinates 1-deoxy-D-xylulose 5-phosphate. Position 20 (R20) interacts with 3-amino-2-oxopropyl phosphate. The active-site Proton acceptor is H45. 1-deoxy-D-xylulose 5-phosphate is bound by residues R47 and H52. The active-site Proton acceptor is the E72. T102 contacts 1-deoxy-D-xylulose 5-phosphate. The active-site Proton donor is H193. Residues G194 and 215 to 216 (GH) contribute to the 3-amino-2-oxopropyl phosphate site.

Belongs to the PNP synthase family. As to quaternary structure, homooctamer; tetramer of dimers.

The protein resides in the cytoplasm. The catalysed reaction is 3-amino-2-oxopropyl phosphate + 1-deoxy-D-xylulose 5-phosphate = pyridoxine 5'-phosphate + phosphate + 2 H2O + H(+). The protein operates within cofactor biosynthesis; pyridoxine 5'-phosphate biosynthesis; pyridoxine 5'-phosphate from D-erythrose 4-phosphate: step 5/5. Its function is as follows. Catalyzes the complicated ring closure reaction between the two acyclic compounds 1-deoxy-D-xylulose-5-phosphate (DXP) and 3-amino-2-oxopropyl phosphate (1-amino-acetone-3-phosphate or AAP) to form pyridoxine 5'-phosphate (PNP) and inorganic phosphate. The polypeptide is Pyridoxine 5'-phosphate synthase (Escherichia coli O6:H1 (strain CFT073 / ATCC 700928 / UPEC)).